A 285-amino-acid polypeptide reads, in one-letter code: Pantothenate synthetase (285 aa).

32–39 serves as a coordination point for ATP; it reads MGALHDGH. Catalysis depends on His39, which acts as the Proton donor. Residue Gln63 participates in (R)-pantoate binding. A beta-alanine-binding site is contributed by Gln63. 149–152 lines the ATP pocket; that stretch reads GEKD. Position 155 (Gln155) interacts with (R)-pantoate. ATP contacts are provided by residues Val178 and 186-189; that span reads MSSR.

This sequence belongs to the pantothenate synthetase family. In terms of assembly, homodimer.

Its subcellular location is the cytoplasm. It carries out the reaction (R)-pantoate + beta-alanine + ATP = (R)-pantothenate + AMP + diphosphate + H(+). The protein operates within cofactor biosynthesis; (R)-pantothenate biosynthesis; (R)-pantothenate from (R)-pantoate and beta-alanine: step 1/1. In terms of biological role, catalyzes the condensation of pantoate with beta-alanine in an ATP-dependent reaction via a pantoyl-adenylate intermediate. The sequence is that of Pantothenate synthetase from Ruegeria pomeroyi (strain ATCC 700808 / DSM 15171 / DSS-3) (Silicibacter pomeroyi).